A 364-amino-acid chain; its full sequence is MSGDMEAKIWGSTQISVKEFCYEWTISNFSFCMGGIRRKIKSPVFSLVANEEVAWCLRVHPNGFDEESKDYLSVYLVLVNCPKRQVRAKFEFWIKNSQGEKYQYTQSLNVPSFQRKQNWGFSKFILRDSLLSHRNWLLPKDKLTLCCKVSIVGAILNMPGQNMIPAIKDPRHMLTDDLGKLWENPLFTDCSLLVAGHEIRAHKAILAARSPVFRAMFEHQMEERLANCFEIQELDFQVFKEMMDFIYTGKAPTLHSHSMACDVLAAAEKYGLEGLKVICEDSLCRNLSVENAAHTLIVADLHSTEQLKTRALHFIAVHASEVSKSSGWKSMVESHPHLVDERFHSLASAQSVFLESSFKCLKGF.

One can recognise an MATH domain in the interval 19 to 149 (EFCYEWTISN…KDKLTLCCKV (131 aa)). The BTB domain occupies 188–255 (TDCSLLVAGH…IYTGKAPTLH (68 aa)).

Belongs to the Tdpoz family.

The protein is TD and POZ domain-containing protein 2 of Mus musculus (Mouse).